Reading from the N-terminus, the 327-residue chain is DNA-directed RNA polymerase subunit alpha (327 aa).

Positions 1–231 (MIYQMQMPAK…DHVTFFANFS (231 aa)) are alpha N-terminal domain (alpha-NTD). The tract at residues 252 to 327 (MRRLFHTKIE…GMDITKYQMK (76 aa)) is alpha C-terminal domain (alpha-CTD).

Belongs to the RNA polymerase alpha chain family. As to quaternary structure, homodimer. The RNAP catalytic core consists of 2 alpha, 1 beta, 1 beta' and 1 omega subunit. When a sigma factor is associated with the core the holoenzyme is formed, which can initiate transcription.

The enzyme catalyses RNA(n) + a ribonucleoside 5'-triphosphate = RNA(n+1) + diphosphate. DNA-dependent RNA polymerase catalyzes the transcription of DNA into RNA using the four ribonucleoside triphosphates as substrates. This is DNA-directed RNA polymerase subunit alpha from Pelodictyon phaeoclathratiforme (strain DSM 5477 / BU-1).